The primary structure comprises 78 residues: DNA-directed RNA polymerase subunit omega (78 aa).

This sequence belongs to the RNA polymerase subunit omega family. In terms of assembly, in cyanobacteria the RNAP catalytic core is composed of 2 alpha, 1 beta, 1 beta', 1 gamma and 1 omega subunit. When a sigma factor is associated with the core the holoenzyme is formed, which can initiate transcription.

It catalyses the reaction RNA(n) + a ribonucleoside 5'-triphosphate = RNA(n+1) + diphosphate. Promotes RNA polymerase assembly. Latches the N- and C-terminal regions of the beta' subunit thereby facilitating its interaction with the beta and alpha subunits. The protein is DNA-directed RNA polymerase subunit omega of Prochlorococcus marinus (strain MIT 9515).